A 425-amino-acid polypeptide reads, in one-letter code: MAYFIDRRLNGKNKSAVNRQRFLRRYKSQIKQSISEAINKRSVTDVESGESVSIPIEDINEPSFHQGRGGERYRVHPGNDHFVQNDRVDRPQGGGAGGSGQGNAGKDGEGQDEFVFNISKDEYLDLLFEDLALPHLKKNQHRQLNEYKTHRAGYTANGVPANISVVRSLQNSLARRTAMTSGKRRRLAELEENLLRVENSEPAQLLEEQRLRNDIADLRARIKRVPFIDTFDLRYKNFEKRAEPSSQAVMFCLMDVSGSMDQPTKDMAKRFYILLYLFLSRTYKNVDVVYIRHHTQAKEVDEQEFFYSQETGGTIVSSALKLMDEVVKERYDPAQWNIYAAQASDGDNWADDSPLCHDILSRQILPVVRYYSYIEITRRAHQSLWREYEHLQATFDNFAIQHIREPEDIYPVFRELFKKQAEENY.

Residues 60–111 (NEPSFHQGRGGERYRVHPGNDHFVQNDRVDRPQGGGAGGSGQGNAGKDGEGQ) form a disordered region. Residues 68 to 90 (RGGERYRVHPGNDHFVQNDRVDR) are compositionally biased toward basic and acidic residues. Over residues 92 to 105 (QGGGAGGSGQGNAG) the composition is skewed to gly residues.

This sequence belongs to the UPF0229 family.

The protein is UPF0229 protein ETA_15540 of Erwinia tasmaniensis (strain DSM 17950 / CFBP 7177 / CIP 109463 / NCPPB 4357 / Et1/99).